A 136-amino-acid chain; its full sequence is Putative pre-16S rRNA nuclease (136 aa).

This sequence belongs to the YqgF nuclease family.

It is found in the cytoplasm. Functionally, could be a nuclease involved in processing of the 5'-end of pre-16S rRNA. This chain is Putative pre-16S rRNA nuclease, found in Francisella tularensis subsp. mediasiatica (strain FSC147).